Here is a 361-residue protein sequence, read N- to C-terminus: DNA replication and repair protein RecF (361 aa).

30–37 (GPNGSGKT) contributes to the ATP binding site.

This sequence belongs to the RecF family.

The protein resides in the cytoplasm. The RecF protein is involved in DNA metabolism; it is required for DNA replication and normal SOS inducibility. RecF binds preferentially to single-stranded, linear DNA. It also seems to bind ATP. The sequence is that of DNA replication and repair protein RecF from Yersinia pseudotuberculosis serotype IB (strain PB1/+).